A 238-amino-acid polypeptide reads, in one-letter code: 5-amino-6-(5-phospho-D-ribitylamino)uracil phosphatase YigB (238 aa).

Catalysis depends on Asp16, which acts as the Nucleophile. Positions 16, 18, and 188 each coordinate Mg(2+). 16 to 18 (DLD) is a binding site for substrate.

This sequence belongs to the HAD-like hydrolase superfamily. Requires Mg(2+) as cofactor. Mn(2+) is required as a cofactor. It depends on Co(2+) as a cofactor. Zn(2+) serves as cofactor.

The catalysed reaction is 5-amino-6-(5-phospho-D-ribitylamino)uracil + H2O = 5-amino-6-(D-ribitylamino)uracil + phosphate. Its pathway is cofactor biosynthesis; riboflavin biosynthesis; 5-amino-6-(D-ribitylamino)uracil from GTP: step 4/4. Catalyzes the dephosphorylation of 5-amino-6-(5-phospho-D-ribitylamino)uracil, and thus could be involved in the riboflavin biosynthesis pathway. Is also able to dephosphorylate flavin mononucleotide (FMN) and other phosphoric acid esters. YigB is important for the formation of dormant persister cells. The polypeptide is 5-amino-6-(5-phospho-D-ribitylamino)uracil phosphatase YigB (yigB) (Escherichia coli (strain K12)).